The chain runs to 180 residues: Inner membrane-spanning protein YciB (180 aa).

Helical transmembrane passes span 11–31 (ILFFVVYKLAGIREAAIALII), 52–72 (IIMGIAVVFFGTLTAYFNKVE), 76–96 (WKVTIVYALFALILLISQYGF), 121–141 (LAWAGFFILCMLINIYISQYC), and 149–169 (FKSFGIIAMTFIATLFTGIYV).

It belongs to the YciB family.

The protein resides in the cell inner membrane. Functionally, plays a role in cell envelope biogenesis, maintenance of cell envelope integrity and membrane homeostasis. The protein is Inner membrane-spanning protein YciB of Mannheimia succiniciproducens (strain KCTC 0769BP / MBEL55E).